Here is a 421-residue protein sequence, read N- to C-terminus: ATP-dependent RNA helicase RhlB (421 aa).

The Q motif motif lies at 9–37; that stretch reads QKFSDFSLHPKVVEALEKKGFHNCTPIQA. The Helicase ATP-binding domain maps to 40-219; the sequence is LPLTLAGRDV…FEQMNNAEYI (180 aa). 53–60 contributes to the ATP binding site; it reads AQTGTGKT. A DEAD box motif is present at residues 165-168; it reads DEAD. The Helicase C-terminal domain maps to 245–390; sequence RLLQTLIEEE…VSKYNPDALM (146 aa). Positions 392–421 are disordered; the sequence is DLPKPLRLTRPRTGNGPRRTGAPRNRRRSG. Low complexity predominate over residues 402 to 414; that stretch reads PRTGNGPRRTGAP.

This sequence belongs to the DEAD box helicase family. RhlB subfamily. As to quaternary structure, component of the RNA degradosome, which is a multiprotein complex involved in RNA processing and mRNA degradation.

It is found in the cytoplasm. The enzyme catalyses ATP + H2O = ADP + phosphate + H(+). DEAD-box RNA helicase involved in RNA degradation. Has RNA-dependent ATPase activity and unwinds double-stranded RNA. This chain is ATP-dependent RNA helicase RhlB, found in Shigella dysenteriae serotype 1 (strain Sd197).